Reading from the N-terminus, the 525-residue chain is CTP synthase (525 aa).

The segment at 1–269 (MKYIIVTGGV…ADAITTHLHL (269 aa)) is amidoligase domain. S12 is a binding site for CTP. S12 lines the UTP pocket. Residues 13–18 (GLGKGI) and D70 contribute to the ATP site. Residues D70 and E144 each contribute to the Mg(2+) site. Residues 151–153 (DIE), 190–195 (KTKPTQ), and K226 each bind CTP. UTP is bound by residues 190–195 (KTKPTQ) and K226. The region spanning 292-524 (VAIVSKYGIE…VSACRKNKKT (233 aa)) is the Glutamine amidotransferase type-1 domain. G348 serves as a coordination point for L-glutamine. The active-site Nucleophile; for glutamine hydrolysis is C375. Residues 376–379 (LGFQ), E399, and R454 contribute to the L-glutamine site. Residues H497 and E499 contribute to the active site.

This sequence belongs to the CTP synthase family. As to quaternary structure, homotetramer.

It carries out the reaction UTP + L-glutamine + ATP + H2O = CTP + L-glutamate + ADP + phosphate + 2 H(+). It catalyses the reaction L-glutamine + H2O = L-glutamate + NH4(+). The catalysed reaction is UTP + NH4(+) + ATP = CTP + ADP + phosphate + 2 H(+). It functions in the pathway pyrimidine metabolism; CTP biosynthesis via de novo pathway; CTP from UDP: step 2/2. Allosterically activated by GTP, when glutamine is the substrate; GTP has no effect on the reaction when ammonia is the substrate. The allosteric effector GTP functions by stabilizing the protein conformation that binds the tetrahedral intermediate(s) formed during glutamine hydrolysis. Inhibited by the product CTP, via allosteric rather than competitive inhibition. In terms of biological role, catalyzes the ATP-dependent amination of UTP to CTP with either L-glutamine or ammonia as the source of nitrogen. Regulates intracellular CTP levels through interactions with the four ribonucleotide triphosphates. This chain is CTP synthase, found in Methanosphaerula palustris (strain ATCC BAA-1556 / DSM 19958 / E1-9c).